Consider the following 182-residue polypeptide: Large ribosomal subunit protein uL5 (182 aa).

This sequence belongs to the universal ribosomal protein uL5 family. In terms of assembly, part of the 50S ribosomal subunit; part of the 5S rRNA/L5/L18/L25 subcomplex. Contacts the 5S rRNA and the P site tRNA. Forms a bridge to the 30S subunit in the 70S ribosome.

In terms of biological role, this is one of the proteins that bind and probably mediate the attachment of the 5S RNA into the large ribosomal subunit, where it forms part of the central protuberance. In the 70S ribosome it contacts protein S13 of the 30S subunit (bridge B1b), connecting the 2 subunits; this bridge is implicated in subunit movement. Contacts the P site tRNA; the 5S rRNA and some of its associated proteins might help stabilize positioning of ribosome-bound tRNAs. This is Large ribosomal subunit protein uL5 from Acidobacterium capsulatum (strain ATCC 51196 / DSM 11244 / BCRC 80197 / JCM 7670 / NBRC 15755 / NCIMB 13165 / 161).